A 95-amino-acid chain; its full sequence is Pancreatic polypeptide prohormone (95 aa).

Positions 1 to 29 are cleaved as a signal peptide; it reads MAAARLCLSLLLLSTCVALLLQPLLGAQG. Tyr65 bears the Tyrosine amide mark. Positions 89–95 are excised as a propeptide; it reads ELSPLDL.

The protein belongs to the NPY family.

It localises to the secreted. Functionally, hormone secreted by pancreatic cells that acts as a regulator of pancreatic and gastrointestinal functions probably by signaling through the G protein-coupled receptor NPY4R2. The polypeptide is Pancreatic polypeptide prohormone (Homo sapiens (Human)).